Here is a 71-residue protein sequence, read N- to C-terminus: Small ribosomal subunit protein bS21 (71 aa).

The tract at residues 39-71 (EKPTQERKRKAAAAVKRQMRRTSRDVTKRKRLY) is disordered. The segment covering 45–71 (RKRKAAAAVKRQMRRTSRDVTKRKRLY) has biased composition (basic residues).

This sequence belongs to the bacterial ribosomal protein bS21 family.

This chain is Small ribosomal subunit protein bS21, found in Xylella fastidiosa (strain M12).